The following is a 203-amino-acid chain: Ribosome maturation factor RimP (203 aa).

Over residues 1 to 21 (MSDSEATTSTDRSESNSTATI) the composition is skewed to polar residues. The disordered stretch occupies residues 1–23 (MSDSEATTSTDRSESNSTATIHN).

This sequence belongs to the RimP family.

It localises to the cytoplasm. Required for maturation of 30S ribosomal subunits. This Paenarthrobacter aurescens (strain TC1) protein is Ribosome maturation factor RimP.